The following is a 599-amino-acid chain: Major centromere autoantigen B (599 aa).

Glycine 2 carries the post-translational modification N,N,N-trimethylglycine; alternate. Glycine 2 is modified (n,N-dimethylglycine; alternate). Glycine 2 bears the N-methylglycine; alternate mark. Positions 2-52 (GPKRRQLTFREKSRIIQEVEENPDLRKGEIARRFNIPPSTLSTILKNKRAI) constitute an HTH psq-type domain. 2 consecutive DNA-binding regions (H-T-H motif) follow at residues 28–48 (KGEI…ILKN) and 97–129 (GIIL…FRRR). One can recognise an HTH CENPB-type domain in the interval 65–136 (CRKTNKLSPY…RRRHGVVSCS (72 aa)). Residues 143 to 184 (ARNAAPRTPAAPASPAAVPSEGSGGSTTGWRAREEQPPSVAE) form a disordered region. Over residues 144-159 (RNAAPRTPAAPASPAA) the composition is skewed to low complexity. Serine 156 and serine 165 each carry phosphoserine. Lysine 246 is covalently cross-linked (Glycyl lysine isopeptide (Lys-Gly) (interchain with G-Cter in SUMO2)). Disordered stretches follow at residues 387-475 (AGFG…EAED) and 495-544 (EAQC…VPSF). Phosphothreonine occurs at positions 396 and 398. Composition is skewed to acidic residues over residues 405–475 (GEEE…EAED) and 506–538 (GGED…DGDE). The tract at residues 536–599 (GDEVPVPSFG…AGVRGLGHQS (64 aa)) is homodimerization.

In terms of assembly, antiparallel homodimer. Interacts with CENPT. Identified in a centromere complex containing histones H2A, H2B and H4, and at least CENPA, CENPB, CENPC, CENPT, CENPN, HJURP, SUPT16H, SSRP1 and RSF1. Poly-ADP-ribosylated by PARP1. Post-translationally, N-terminally methylated by METTL11A/NTM1. Alpha-N-methylation is stimulated in response to extracellular stimuli, including increased cell density and heat shock, and seems to facilitate binding to CENP-B boxes. Chromatin-bound CENP-B is primarily trimethylated.

The protein localises to the nucleus. It localises to the chromosome. The protein resides in the centromere. Interacts with centromeric heterochromatin in chromosomes and binds to a specific 17 bp subset of alphoid satellite DNA, called the CENP-B box. May organize arrays of centromere satellite DNA into a higher-order structure which then directs centromere formation and kinetochore assembly in mammalian chromosomes. The protein is Major centromere autoantigen B (CENPB) of Homo sapiens (Human).